The following is a 181-amino-acid chain: Transcription termination/antitermination protein NusG (181 aa).

In terms of domain architecture, KOW spans 130–161; it reads PGEMIRVNDGPFADFNGVVEEVDYEKSRLKVS.

The protein belongs to the NusG family. Monomer. Interacts with the transcription termination factor Rho and with RNA polymerase.

Its function is as follows. Participates in transcription elongation, termination and antitermination. In the absence of Rho, increases the rate of transcription elongation by the RNA polymerase (RNAP), probably by partially suppressing pausing. In the presence of Rho, modulates most Rho-dependent termination events by interacting with the RNAP to render the complex more susceptible to the termination activity of Rho. May be required to overcome a kinetic limitation of Rho to function at certain terminators. Also involved in ribosomal RNA transcriptional antitermination. This chain is Transcription termination/antitermination protein NusG, found in Buchnera aphidicola subsp. Acyrthosiphon pisum (strain APS) (Acyrthosiphon pisum symbiotic bacterium).